Consider the following 348-residue polypeptide: DNA-directed RNA polymerase subunit alpha (348 aa).

The tract at residues 1-243 (MLIKQGDRLI…DQISVFINFD (243 aa)) is alpha N-terminal domain (alpha-NTD). The interval 260–348 (VNENLFKGID…WLKRKQQNEA (89 aa)) is alpha C-terminal domain (alpha-CTD).

The protein belongs to the RNA polymerase alpha chain family. As to quaternary structure, homodimer. The RNAP catalytic core consists of 2 alpha, 1 beta, 1 beta' and 1 omega subunit. When a sigma factor is associated with the core the holoenzyme is formed, which can initiate transcription.

It catalyses the reaction RNA(n) + a ribonucleoside 5'-triphosphate = RNA(n+1) + diphosphate. Its function is as follows. DNA-dependent RNA polymerase catalyzes the transcription of DNA into RNA using the four ribonucleoside triphosphates as substrates. The sequence is that of DNA-directed RNA polymerase subunit alpha from Oleidesulfovibrio alaskensis (strain ATCC BAA-1058 / DSM 17464 / G20) (Desulfovibrio alaskensis).